The following is an 857-amino-acid chain: Potassium channel AKT1 (857 aa).

Residues 1–61 (MRGGALLCGQ…PYDHKYRIWE (61 aa)) are Cytoplasmic-facing. A helical transmembrane segment spans residues 62–82 (AFLVVLVVYTAWVSPFEFGFL). The Extracellular segment spans residues 83–90 (RKPRPPLS). A helical membrane pass occupies residues 91–111 (ITDNIVNAFFAIDIIMTFFVG). The Cytoplasmic portion of the chain corresponds to 112 to 134 (YLDKSTYLIVDDRKQIAFKYLRS). The chain crosses the membrane as a helical span at residues 135-155 (WFLLDLVSTIPSEAAMRISSQ). Residues 156 to 158 (SYG) lie on the Extracellular side of the membrane. Residues 159-179 (LFNMLRLWRLRRVGALFARLE) form a helical; Voltage-sensor membrane-spanning segment. Residues 180-193 (KDRNFNYFWVRCAK) lie on the Cytoplasmic side of the membrane. Residues 194 to 214 (LVCVTLFAVHCAACFYYLIAA) form a helical membrane-spanning segment. The Extracellular portion of the chain corresponds to 215 to 241 (RNSNPAKTWIGANVANFLEESLWMRYV). An intramembrane region (pore-forming) is located at residues 242–261 (TSMYWSITTLTTVGYGDLHP). The Extracellular portion of the chain corresponds to 262-265 (VNTK). Residues 266–286 (EMIFDIFYMLFNLGLTAYLIG) traverse the membrane as a helical segment. Over 287-857 (NMTNLVVHGT…GDHLIFATDS (571 aa)) the chain is Cytoplasmic. 372–493 (LFRGVSNDLL…IMNNLLQHLK (122 aa)) contributes to the a nucleoside 3',5'-cyclic phosphate binding site. ANK repeat units lie at residues 515–546 (KMDL…DPNE), 550–579 (NGRT…DPNC), 583–612 (EGSV…TIDA), 614–643 (DVGH…DVTR), 647–676 (TGTS…DVNK), and 680–709 (HGWT…ERRV). The KHA domain maps to 790–857 (RVTISCAEKD…GDHLIFATDS (68 aa)).

The protein belongs to the potassium channel family. Plant (TC 1.A.1.4) subfamily. In terms of assembly, the potassium channel is probably composed of a homo- or heterotetrameric complex of pore-forming subunits. Possible heteromultimer with AKT2 or KAT3. Part of a K(+)-channel calcium-sensing kinase/phosphatase complex composed by a calcium sensor CBL (CBL1, CBL2, CBL3 or CBL9), a kinase CIPK (CIPK6, CIPK16 or CIPK23), a phosphatase PP2C (AIP1) and a K(+)-channel (AKT1). Interacts directly with AIP1, CBL10, CIPK6, CIPK16 and CIPK23. In terms of processing, phosphorylated by CIPK proteins CIPK6, CIPK16 and CIPK23. The activation by phosphorylation is induced by low K(+) conditions and stimulates K(+) uptake and relocation. Dephosphorylation by AIP1 repressed the transport activity. As to expression, preferentially expressed in the peripheral cell layers of root mature including root cortex and root hairs. Detected also, at a lower level, in the mesophyll of the leaves and at restricted sites corresponding to hydathodes and guard cells.

Its subcellular location is the cell membrane. Its function is as follows. Highly selective inward-rectifying potassium channel that mediate potassium uptake by plant roots in response to low K(+) conditions, by a calcium-, CBL-, and CIPK-dependent pathway. Positively regulated by phosphorylation by CIPK23. Negatively regulated by a kinase-independent regulatory mechanism involving a competing direct binding of CBL10. Involved in the stomatal regulation by monitoring the turgor pressure in guard cells. Assuming opened or closed conformations in response to the voltage difference across the membrane, the channel is activated by hyperpolarization. May interact with the cytoskeleton or with regulatory proteins. Is essential with POT5/HAK5 for high-affinity potassium uptake in roots during seedling establishment and postgermination growth under low potassium conditions. This Arabidopsis thaliana (Mouse-ear cress) protein is Potassium channel AKT1 (AKT1).